Consider the following 375-residue polypeptide: uncharacterized protein (375 aa).

The Radical SAM core domain occupies 78–302 (KKIEITSTIH…IFPNIRITSP (225 aa)). Cys92, Cys98, and Cys101 together coordinate [4Fe-4S] cluster.

[4Fe-4S] cluster is required as a cofactor.

This is an uncharacterized protein from Methanocaldococcus jannaschii (strain ATCC 43067 / DSM 2661 / JAL-1 / JCM 10045 / NBRC 100440) (Methanococcus jannaschii).